The following is a 93-amino-acid chain: Small ribosomal subunit protein uS19 (93 aa).

This sequence belongs to the universal ribosomal protein uS19 family.

In terms of biological role, protein S19 forms a complex with S13 that binds strongly to the 16S ribosomal RNA. This Campylobacter hominis (strain ATCC BAA-381 / DSM 21671 / CCUG 45161 / LMG 19568 / NCTC 13146 / CH001A) protein is Small ribosomal subunit protein uS19.